A 184-amino-acid chain; its full sequence is ATP synthase subunit delta (184 aa).

This sequence belongs to the ATPase delta chain family. As to quaternary structure, F-type ATPases have 2 components, F(1) - the catalytic core - and F(0) - the membrane proton channel. F(1) has five subunits: alpha(3), beta(3), gamma(1), delta(1), epsilon(1). F(0) has three main subunits: a(1), b(2) and c(10-14). The alpha and beta chains form an alternating ring which encloses part of the gamma chain. F(1) is attached to F(0) by a central stalk formed by the gamma and epsilon chains, while a peripheral stalk is formed by the delta and b chains.

The protein localises to the cell inner membrane. In terms of biological role, f(1)F(0) ATP synthase produces ATP from ADP in the presence of a proton or sodium gradient. F-type ATPases consist of two structural domains, F(1) containing the extramembraneous catalytic core and F(0) containing the membrane proton channel, linked together by a central stalk and a peripheral stalk. During catalysis, ATP synthesis in the catalytic domain of F(1) is coupled via a rotary mechanism of the central stalk subunits to proton translocation. Its function is as follows. This protein is part of the stalk that links CF(0) to CF(1). It either transmits conformational changes from CF(0) to CF(1) or is implicated in proton conduction. The chain is ATP synthase subunit delta from Rickettsia rickettsii (strain Iowa).